Here is a 43-residue protein sequence, read N- to C-terminus: Avenin-F (43 aa).

The segment at 1 to 23 (TTTVQYDPSEQYQPYPEQQEPFV) is disordered. Residues 10–23 (EQYQPYPEQQEPFV) show a composition bias toward low complexity. Copy 1 of the repeat occupies 21 to 26 (PFVQQQ). A 3 X 6 aa tandem repeats of P-F-V-Q-Q-Q region spans residues 21 to 40 (PFVQQQPPFVQQQQPFVQQQ). One copy of the 2; approximate repeat lies at 27 to 34 (PPFVQQQQ). Repeat unit 3 spans residues 35–40 (PFVQQQ).

This sequence belongs to the gliadin/glutenin family. In terms of assembly, monomer.

The protein resides in the vacuole. The protein localises to the aleurone grain. Seed storage protein. Serves as a source of nitrogen, carbon, and sulfur for the young developing seedling. In Avena sativa (Oat), this protein is Avenin-F.